We begin with the raw amino-acid sequence, 278 residues long: Undecaprenyl-diphosphatase 1 (278 aa).

Transmembrane regions (helical) follow at residues 1-21 (MFFGILKAIILGIVEGITEFL), 43-63 (AFTTTFEYVIQLGAIIAVVLL), 83-103 (IWATWVKVVVGVIPSVIIGFL), 112-132 (LMNWLVVSIALIVYGIAFIFI), 192-212 (FSFFLSIPTMLGVSVLKIGSY), 224-244 (IVILLVGMFVSFVVAYVVIKW), and 257-277 (FGWYRIILGVLVIALGAIGII).

This sequence belongs to the UppP family.

The protein resides in the cell membrane. The catalysed reaction is di-trans,octa-cis-undecaprenyl diphosphate + H2O = di-trans,octa-cis-undecaprenyl phosphate + phosphate + H(+). In terms of biological role, catalyzes the dephosphorylation of undecaprenyl diphosphate (UPP). Confers resistance to bacitracin. The protein is Undecaprenyl-diphosphatase 1 of Oenococcus oeni (strain ATCC BAA-331 / PSU-1).